We begin with the raw amino-acid sequence, 378 residues long: UDP-N-acetylglucosamine 2-epimerase (378 aa).

The active site involves histidine 214.

The protein belongs to the UDP-N-acetylglucosamine 2-epimerase family.

It catalyses the reaction UDP-N-acetyl-alpha-D-glucosamine = UDP-N-acetyl-alpha-D-mannosamine. It participates in bacterial outer membrane biogenesis; LPS O-antigen biosynthesis. The sequence is that of UDP-N-acetylglucosamine 2-epimerase (rfbC) from Salmonella borreze.